The following is a 292-amino-acid chain: Putative xanthine dehydrogenase FAD-binding subunit XdhB (292 aa).

The FAD-binding PCMH-type domain maps to 1 to 176 (MFDFASYHRA…VAFHFPPQPK (176 aa)). FAD-binding positions include 27 to 34 (KLLAGGTD), 109 to 113 (ATYGG), Ile165, and Phe184.

In terms of assembly, heterotrimer of XdhA, XdhB and XdhC. FAD serves as cofactor.

The enzyme catalyses xanthine + NAD(+) + H2O = urate + NADH + H(+). The catalysed reaction is hypoxanthine + NAD(+) + H2O = xanthine + NADH + H(+). The protein operates within purine metabolism; hypoxanthine degradation; urate from hypoxanthine: step 1/2. Its pathway is purine metabolism; hypoxanthine degradation; urate from hypoxanthine: step 2/2. Functionally, presumed to be a dehydrogenase, but possibly an oxidase. Participates in limited purine salvage (requires aspartate) but does not support aerobic growth on purines as the sole carbon source (purine catabolism). This chain is Putative xanthine dehydrogenase FAD-binding subunit XdhB (xdhB), found in Escherichia coli (strain K12).